We begin with the raw amino-acid sequence, 122 residues long: Small ribosomal subunit protein uS13 (122 aa).

The tract at residues 98–122 (VRGQRTHTNARTRKGPAKAIAGKKK) is disordered.

This sequence belongs to the universal ribosomal protein uS13 family. As to quaternary structure, part of the 30S ribosomal subunit. Forms a loose heterodimer with protein S19. Forms two bridges to the 50S subunit in the 70S ribosome.

In terms of biological role, located at the top of the head of the 30S subunit, it contacts several helices of the 16S rRNA. In the 70S ribosome it contacts the 23S rRNA (bridge B1a) and protein L5 of the 50S subunit (bridge B1b), connecting the 2 subunits; these bridges are implicated in subunit movement. Contacts the tRNAs in the A and P-sites. The sequence is that of Small ribosomal subunit protein uS13 from Jannaschia sp. (strain CCS1).